A 192-amino-acid chain; its full sequence is MAKATTIKEALVKWEEKTGEKANDATAVKLYGQIPPIEKMDASLSNLVNCERLSLSTNCIEKIANLNGLKNLKILSLGRNNIKNLNGLEAVGDTLEELWISYNLIEKLKGIHVMKKLKVLYMSNNLVKEWGEFLKLADLPSLVDLVFVGNPLEEKYSADGNWIEEATKRLPKLKKLDGNPVIKQEEETEGES.

LRR repeat units lie at residues 49–70, 71–92, 94–115, and 116–137; these read NCERLSLSTNCIEKIANLNGLK, NLKILSLGRNNIKNLNGLEAVG, TLEELWISYNLIEKLKGIHVMK, and KLKVLYMSNNLVKEWGEFLKLA. The region spanning 150 to 192 is the LRRCT domain; the sequence is NPLEEKYSADGNWIEEATKRLPKLKKLDGNPVIKQEEETEGES.

It belongs to the dynein light chain LC1-type family. In terms of assembly, interacts with DNAH5, a outer arm dynein heavy chain. Interacts with tubulin located within the A-tubule of the outer doublets in a ATP-independent manner.

Its subcellular location is the cytoplasm. The protein resides in the cytoskeleton. It localises to the cilium axoneme. Functionally, part of the multisubunit axonemal ATPase complexes that generate the force for cilia motility and govern beat frequency. Component of the outer arm dynein (ODA). May be involved in a mechanosensory feedback mechanism controlling ODA activity based on external conformational cues by tethering the outer arm dynein heavy chain (DNAH5) to the microtubule within the axoneme. The protein is Dynein axonemal light chain 1 (dnal1) of Danio rerio (Zebrafish).